The chain runs to 323 residues: Probable cell division protein WhiA (323 aa).

The segment at residues 275–309 (TLKELGEMLTTGQVSKSGINHRLRKLDQIAERLRS) is a DNA-binding region (H-T-H motif).

It belongs to the WhiA family.

Its function is as follows. Involved in cell division and chromosome segregation. This chain is Probable cell division protein WhiA, found in Listeria innocua serovar 6a (strain ATCC BAA-680 / CLIP 11262).